The chain runs to 577 residues: Optineurin (577 aa).

2 disordered regions span residues 1 to 32 (MSHQPLSCLTEKEDSPSESTGNGPPHLAHPNL) and 101 to 143 (SHEN…KDQL). Residues 38–170 (EELLQQMKEL…VSELQLKLNS (133 aa)) adopt a coiled-coil conformation. The tract at residues 58–209 (MKLNNQAMKG…GPTRTVSTGT (152 aa)) is interaction with Rab8. Positions 176-181 (DSFVEI) match the LIR motif. Serine 177 carries the phosphoserine; by TBK1 modification. The segment covering 186–197 (GEAEGSVKEIKH) has biased composition (basic and acidic residues). Disordered stretches follow at residues 186-209 (GEAEGSVKEIKHSPGPTRTVSTGT) and 261-297 (VSDFEKKTSNRSEIETQTEGSTEKENDEEKGPETVGS). Residue serine 198 is modified to Phosphoserine. Residues 239–508 (CLREGNQKVE…LLKENDAFED (270 aa)) are a coiled coil. Basic and acidic residues-rich tracts occupy residues 261-274 (VSDFEKKTSNRSEI) and 281-292 (STEKENDEEKGP). Serine 342 carries the post-translational modification Phosphoserine. The interaction with HD stretch occupies residues 411–577 (TRKESEKVDR…LQIHVMDCII (167 aa)). Residues 412 to 520 (RKESEKVDRA…RQSLMEMQSR (109 aa)) are interaction with MYO6. Residues 474-479 (DFHAER) carry the UBAN motif. A Phosphoserine modification is found at serine 526. The CCHC NOA-type zinc finger occupies 547-577 (QRNIPIHSCPKCGEVLPDIDTLQIHVMDCII). Positions 555, 558, 571, and 575 each coordinate Zn(2+).

In terms of assembly, self-associates. Interacts with HD. Interacts with GTF3A. Interacts with MYO6. Interacts (via UBAN) with ubiquitinated TFRC. Interacts with GTP-bound Rab8 (RAB8A and/or RAB8B). Interacts with TBC1D17. Interacts with TBK1. Interacts with TRAF3. Binds to linear ubiquitin chains. Interacts with LC3 family members MAP1LC3A, MAP1LC3B, GABARAP, GABARAPL1 and GABARAPL2; OPTN phosphorylation increases the association (at least with MAP1LC3B). Interacts with RAB12; the interaction may be indirect. Interacts with TBK1; this interaction leads to the Golgi localization of TBK1 and its subsequent activation. Interacts with palmitoyltransferase ZDHHC17/HIP14; the interaction does not lead to palmitoylation of OPTN. Interacts with CYLD. Interacts with TOM1; the interaction is indirect and is mediated by MYO6, which acts as a bridge between TOM1 and OPTN. Interacts with USP12; the interaction is independent of USP12 deubiquitinase activity and may be involved in regulation of autophagic flux. As to quaternary structure, (Microbial infection) Interacts with E3 14.7 kDa protein of group C human adenovirus. Interacts with Bluetongue virus protein NS3. In terms of processing, phosphorylated by TBK1, leading to restrict bacterial proliferation in case of infection. Phosphorylation is induced by phorbol esters and decreases its half-time. As to expression, present in aqueous humor of the eye (at protein level). Expressed in the trabecular meshwork (at protein level). Expressed in nonpigmented ciliary epithelium (at protein level). Expressed at high levels in skeletal muscle, also detected in heart, brain, pancreas, kidney, placenta and liver. Expressed in dermal fibroblasts (at protein level).

The protein resides in the cytoplasm. The protein localises to the perinuclear region. It is found in the golgi apparatus. It localises to the trans-Golgi network. Its subcellular location is the cytoplasmic vesicle. The protein resides in the autophagosome. The protein localises to the recycling endosome. Plays an important role in the maintenance of the Golgi complex, in membrane trafficking, in exocytosis, through its interaction with myosin VI and Rab8. Links myosin VI to the Golgi complex and plays an important role in Golgi ribbon formation. Plays a role in the activation of innate immune response during viral infection. Mechanistically, recruits TBK1 at the Golgi apparatus, promoting its trans-phosphorylation after RLR or TLR3 stimulation. In turn, activated TBK1 phosphorylates its downstream partner IRF3 to produce IFN-beta/IFNB1. Plays a neuroprotective role in the eye and optic nerve. May act by regulating membrane trafficking and cellular morphogenesis via a complex that contains Rab8 and huntingtin (HD). Mediates the interaction of Rab8 with the probable GTPase-activating protein TBC1D17 during Rab8-mediated endocytic trafficking, such as that of transferrin receptor (TFRC/TfR); regulates Rab8 recruitment to tubules emanating from the endocytic recycling compartment. Autophagy receptor that interacts directly with both the cargo to become degraded and an autophagy modifier of the MAP1 LC3 family; targets ubiquitin-coated bacteria (xenophagy), such as cytoplasmic Salmonella enterica, and appears to function in the same pathway as SQSTM1 and CALCOCO2/NDP52. Functionally, (Microbial infection) May constitute a cellular target for various viruses, such as adenovirus E3 14.7 or Bluetongue virus, to inhibit innate immune response. During RNA virus infection, such as that of Sendai virus, negatively regulates the induction of IFNB1. This is Optineurin (OPTN) from Homo sapiens (Human).